Here is a 462-residue protein sequence, read N- to C-terminus: Nuclear factor interleukin-3-regulated protein (462 aa).

The tract at residues 1–22 (MQLRKMQTIKKEPAPLDPTSSS) is disordered. Residue Lys24 forms a Glycyl lysine isopeptide (Lys-Gly) (interchain with G-Cter in SUMO2) linkage. The 64-residue stretch at 73-136 (DAMYWEKRRK…GLISSTAYAQ (64 aa)) folds into the bZIP domain. The tract at residues 79 to 95 (KRRKNNEAAKRSREKRR) is basic motif. The tract at residues 99-106 (LVLENKLI) is leucine-zipper. The tract at residues 188 to 214 (SDVSEVSSVEHTQESPAQGGCRSPENK) is disordered. A Glycyl lysine isopeptide (Lys-Gly) (interchain with G-Cter in SUMO2) cross-link involves residue Lys214. Residue Lys219 forms a Glycyl lysine isopeptide (Lys-Gly) (interchain with G-Cter in SUMO1); alternate linkage. Residue Lys219 forms a Glycyl lysine isopeptide (Lys-Gly) (interchain with G-Cter in SUMO2); alternate linkage. Residues 259–298 (PPLLQVHGSTSNSPRTSEADEGVVGKSSDGEDEQQVPKGP) are disordered. A compositionally biased stretch (polar residues) spans 265 to 274 (HGSTSNSPRT). The segment at 281-420 (VVGKSSDGED…FKTGVVEVKD (140 aa)) is necessary for transcriptional repression and sufficient for interaction with PER2. Ser301 bears the Phosphoserine mark. Glycyl lysine isopeptide (Lys-Gly) (interchain with G-Cter in SUMO2) cross-links involve residues Lys314, Lys326, Lys332, Lys337, and Lys350. Phosphoserine is present on Ser353. Glycyl lysine isopeptide (Lys-Gly) (interchain with G-Cter in SUMO2) cross-links involve residues Lys360, Lys394, Lys401, Lys406, Lys412, Lys419, Lys424, Lys434, and Lys448.

The protein belongs to the bZIP family. NFIL3 subfamily. As to quaternary structure, homodimer. Binds DNA as a dimer. Interacts with DR1. Interacts with PER2 and CRY2. Interacts with NR0B2. Interacts with NR1D1. Interacts with MYSM1. In terms of tissue distribution, expressed in suprachiasmatic nucleus and liver (at protein level). Expressed in suprachiasmatic nucleus, hippocampus, gyrus dentatus, piriform cortex, internal granular layer of olfactory bulb, dorsomedial hypothalamic nucleus, pontine nuclei, granular layer of cerebellum, liver and calvariae osteoblasts. Expressed in natural killer cell precursors in bone marrow.

The protein resides in the nucleus. Acts as a transcriptional regulator that recognizes and binds to the sequence 5'-[GA]TTA[CT]GTAA[CT]-3', a sequence present in many cellular and viral promoters. Represses transcription from promoters with activating transcription factor (ATF) sites. Represses promoter activity in osteoblasts. Represses transcriptional activity of PER1. Represses transcriptional activity of PER2 via the B-site on the promoter. Activates transcription from the interleukin-3 promoter in T-cells. Competes for the same consensus-binding site with PAR DNA-binding factors (DBP, HLF and TEF). Component of the circadian clock that acts as a negative regulator for the circadian expression of PER2 oscillation in the cell-autonomous core clock. Protects pro-B cells from programmed cell death. Represses the transcription of CYP2A5. Positively regulates the expression and activity of CES2 by antagonizing the repressive action of NR1D1 on CES2. Required for the development of natural killer cell precursors. The polypeptide is Nuclear factor interleukin-3-regulated protein (Nfil3) (Mus musculus (Mouse)).